The chain runs to 130 residues: Methylglyoxal synthase (130 aa).

An MGS-like domain is found at 1–130 (MSTPRIALIA…DLARRLPVKA (130 aa)). Substrate is bound by residues His11, Lys15, 37–40 (TGTT), and 57–58 (SG). The active-site Proton donor/acceptor is Asp63. Residue His90 participates in substrate binding.

This sequence belongs to the methylglyoxal synthase family.

The enzyme catalyses dihydroxyacetone phosphate = methylglyoxal + phosphate. Its function is as follows. Catalyzes the formation of methylglyoxal from dihydroxyacetone phosphate. The sequence is that of Methylglyoxal synthase from Burkholderia thailandensis (strain ATCC 700388 / DSM 13276 / CCUG 48851 / CIP 106301 / E264).